The sequence spans 346 residues: Enoyl-[acyl-carrier-protein] reductase, mitochondrial (346 aa).

The transit peptide at 1-22 (MQKTIRSQALIYRKFGDPLKVL) directs the protein to the mitochondrion. Tyr-59 (proton donor) is an active-site residue. Residues Asn-131, 157–160 (NSGV), 180–182 (RNR), 249–252 (YGGM), 274–276 (VAV), and Lys-332 contribute to the NADP(+) site.

The protein belongs to the zinc-containing alcohol dehydrogenase family. Quinone oxidoreductase subfamily. Homodimer.

The protein resides in the mitochondrion. The enzyme catalyses a 2,3-saturated acyl-[ACP] + NADP(+) = a (2E)-enoyl-[ACP] + NADPH + H(+). In terms of biological role, catalyzes the NADPH-dependent reduction of trans-2-enoyl thioesters in mitochondrial fatty acid synthesis (fatty acid synthesis type II). Fatty acid chain elongation in mitochondria uses acyl carrier protein (ACP) as an acyl group carrier, but the enzyme accepts both ACP and CoA thioesters as substrates in vitro. May provide the octanoyl chain used for lipoic acid biosynthesis, regulating protein lipoylation and mitochondrial respiratory activity. Involved in iron homeostasis; affecting Fe-S cluster assembly and ceramide metabolism. Required for proper morphology and bioenergetic functions of mitochondria. Required for maintenance of neurons. This chain is Enoyl-[acyl-carrier-protein] reductase, mitochondrial, found in Caenorhabditis elegans.